A 458-amino-acid chain; its full sequence is Periphilin-1 (458 aa).

Basic and acidic residues-rich tracts occupy residues 1 to 18 and 63 to 107; these read MWSEGRYEYERIPRERAP and EGRS…DGFR. 2 disordered regions span residues 1–51 and 63–284; these read MWSE…SYNR and EGRS…LFED. Positions 103–109 match the Nuclear localization signal motif; that stretch reads RDGFRRK. Residue lysine 109 forms a Glycyl lysine isopeptide (Lys-Gly) (interchain with G-Cter in SUMO2) linkage. A phosphoserine mark is found at serine 110, serine 114, serine 133, and serine 140. The segment covering 116–142 has biased composition (basic and acidic residues); sequence YARERSPYKRDNTFFRESPVGRKDSPH. A compositionally biased stretch (low complexity) spans 143–154; it reads SRSGSSVSSRSY. Residue lysine 160 forms a Glycyl lysine isopeptide (Lys-Gly) (interchain with G-Cter in SUMO2) linkage. Residues serine 161 and serine 167 each carry the phosphoserine modification. A Glycyl lysine isopeptide (Lys-Gly) (interchain with G-Cter in SUMO2) cross-link involves residue lysine 180. A compositionally biased stretch (basic and acidic residues) spans 181 to 194; that stretch reads RQNEGNPERDKERP. Phosphoserine is present on serine 197. Lysine 199 is covalently cross-linked (Glycyl lysine isopeptide (Lys-Gly) (interchain with G-Cter in SUMO2)). Phosphoserine occurs at positions 201 and 205. A compositionally biased stretch (low complexity) spans 205–215; that stretch reads SPSSGSAVSSS. Basic and acidic residues predominate over residues 217-230; it reads VLDKPSRLTEKELA. Residue lysine 227 forms a Glycyl lysine isopeptide (Lys-Gly) (interchain with G-Cter in SUMO2) linkage. N6-acetyllysine; alternate occurs at positions 235 and 240. Glycyl lysine isopeptide (Lys-Gly) (interchain with G-Cter in SUMO2); alternate cross-links involve residues lysine 235 and lysine 240. Residues 237–246 are compositionally biased toward basic and acidic residues; that stretch reads AAEKLEKSDE. Serine 325 is modified (phosphoserine). Residue lysine 328 forms a Glycyl lysine isopeptide (Lys-Gly) (interchain with G-Cter in SUMO2) linkage. Positions 345–406 are disordered; sequence GQTWQQVPPV…TQLRRTTGAP (62 aa). Residues 377–386 are compositionally biased toward pro residues; the sequence is PQPPQAPQPL. Residues 388-398 are compositionally biased toward basic residues; it reads PRKKRVRRTTQ. Lysine 453 participates in a covalent cross-link: Glycyl lysine isopeptide (Lys-Gly) (interchain with G-Cter in SUMO2).

As to quaternary structure, homodimer. Component of the HUSH complex; at least composed of TASOR, PPHLN1 and MPHOSPH8. Interacts with SIN3A and HDAC1. May interact with PPL. In terms of processing, substrate of transglutaminase (in vitro). As to expression, ubiquitous.

It localises to the nucleus. It is found in the cytoplasm. Its subcellular location is the chromosome. In terms of biological role, component of the HUSH complex, a multiprotein complex that mediates epigenetic repression. The HUSH complex is recruited to genomic loci rich in H3K9me3 and is probably required to maintain transcriptional silencing by promoting recruitment of SETDB1, a histone methyltransferase that mediates further deposition of H3K9me3. In the HUSH complex, contributes to the maintenance of the complex at chromatin. Acts as a transcriptional corepressor and regulates the cell cycle, probably via the HUSH complex. The HUSH complex is also involved in the silencing of unintegrated retroviral DNA: some part of the retroviral DNA formed immediately after infection remains unintegrated in the host genome and is transcriptionally repressed. May be involved in epithelial differentiation by contributing to epidermal integrity and barrier formation. In Homo sapiens (Human), this protein is Periphilin-1.